Reading from the N-terminus, the 344-residue chain is Arginine N-succinyltransferase (344 aa).

Leu125 provides a ligand contact to succinyl-CoA. Residue His229 is the Proton donor of the active site.

Belongs to the arginine N-succinyltransferase family.

The enzyme catalyses succinyl-CoA + L-arginine = N(2)-succinyl-L-arginine + CoA + H(+). Its pathway is amino-acid degradation; L-arginine degradation via AST pathway; L-glutamate and succinate from L-arginine: step 1/5. Catalyzes the transfer of succinyl-CoA to arginine to produce N(2)-succinylarginine. This chain is Arginine N-succinyltransferase, found in Escherichia fergusonii (strain ATCC 35469 / DSM 13698 / CCUG 18766 / IAM 14443 / JCM 21226 / LMG 7866 / NBRC 102419 / NCTC 12128 / CDC 0568-73).